The following is a 217-amino-acid chain: Glycosylphosphatidylinositol anchor biosynthesis protein 11 (217 aa).

N-linked (GlcNAc...) asparagine glycosylation occurs at asparagine 20. The next 6 membrane-spanning stretches (helical) occupy residues 41 to 61, 66 to 86, 107 to 127, 139 to 159, 169 to 189, and 197 to 217; these read VYVR…LYWF, DFNL…YLIF, FITL…IVLF, WLLA…VFNC, YFIS…LDWD, and VPLI…GGYI.

Belongs to the PIGF family.

Its subcellular location is the endoplasmic reticulum membrane. The protein operates within glycolipid biosynthesis; glycosylphosphatidylinositol-anchor biosynthesis. Functionally, acts in the GPI biosynthetic pathway between GlcNAc-PI synthesis and GPI transfer to protein. This is Glycosylphosphatidylinositol anchor biosynthesis protein 11 (GPI11) from Kluyveromyces lactis (strain ATCC 8585 / CBS 2359 / DSM 70799 / NBRC 1267 / NRRL Y-1140 / WM37) (Yeast).